A 73-amino-acid polypeptide reads, in one-letter code: MAKEELIEFGGVVSEALPDNRYRVLLENGVEIWAYASGKMQKHRIRILAGDRVTLEMSPYDLTKGRINFRHKS.

In terms of domain architecture, S1-like spans 1–72 (MAKEELIEFG…TKGRINFRHK (72 aa)).

The protein belongs to the IF-1 family. In terms of assembly, component of the 30S ribosomal translation pre-initiation complex which assembles on the 30S ribosome in the order IF-2 and IF-3, IF-1 and N-formylmethionyl-tRNA(fMet); mRNA recruitment can occur at any time during PIC assembly.

The protein resides in the cytoplasm. One of the essential components for the initiation of protein synthesis. Stabilizes the binding of IF-2 and IF-3 on the 30S subunit to which N-formylmethionyl-tRNA(fMet) subsequently binds. Helps modulate mRNA selection, yielding the 30S pre-initiation complex (PIC). Upon addition of the 50S ribosomal subunit IF-1, IF-2 and IF-3 are released leaving the mature 70S translation initiation complex. This is Translation initiation factor IF-1 1 from Cupriavidus pinatubonensis (strain JMP 134 / LMG 1197) (Cupriavidus necator (strain JMP 134)).